Consider the following 71-residue polypeptide: MAKQAAIEQDGTIIEALSNAMFRVELENGHVVTAHISGKMRMHYIKLLPGDKVKLEMSPYDLTKARITYRY.

The S1-like domain maps to 1-71; that stretch reads MAKQAAIEQD…LTKARITYRY (71 aa).

Belongs to the IF-1 family. Component of the 30S ribosomal translation pre-initiation complex which assembles on the 30S ribosome in the order IF-2 and IF-3, IF-1 and N-formylmethionyl-tRNA(fMet); mRNA recruitment can occur at any time during PIC assembly.

The protein resides in the cytoplasm. Functionally, one of the essential components for the initiation of protein synthesis. Stabilizes the binding of IF-2 and IF-3 on the 30S subunit to which N-formylmethionyl-tRNA(fMet) subsequently binds. Helps modulate mRNA selection, yielding the 30S pre-initiation complex (PIC). Upon addition of the 50S ribosomal subunit IF-1, IF-2 and IF-3 are released leaving the mature 70S translation initiation complex. The protein is Translation initiation factor IF-1 of Christiangramia forsetii (strain DSM 17595 / CGMCC 1.15422 / KT0803) (Gramella forsetii).